The chain runs to 529 residues: Bifunctional purine biosynthesis protein PurH (529 aa).

The 148-residue stretch at 1–148 (MQQRRPVRRA…KNHKDVAIVV (148 aa)) folds into the MGS-like domain. Lys287 carries the post-translational modification N6-acetyllysine.

This sequence belongs to the PurH family.

It catalyses the reaction (6R)-10-formyltetrahydrofolate + 5-amino-1-(5-phospho-beta-D-ribosyl)imidazole-4-carboxamide = 5-formamido-1-(5-phospho-D-ribosyl)imidazole-4-carboxamide + (6S)-5,6,7,8-tetrahydrofolate. The enzyme catalyses IMP + H2O = 5-formamido-1-(5-phospho-D-ribosyl)imidazole-4-carboxamide. The protein operates within purine metabolism; IMP biosynthesis via de novo pathway; 5-formamido-1-(5-phospho-D-ribosyl)imidazole-4-carboxamide from 5-amino-1-(5-phospho-D-ribosyl)imidazole-4-carboxamide (10-formyl THF route): step 1/1. It functions in the pathway purine metabolism; IMP biosynthesis via de novo pathway; IMP from 5-formamido-1-(5-phospho-D-ribosyl)imidazole-4-carboxamide: step 1/1. This Escherichia coli O7:K1 (strain IAI39 / ExPEC) protein is Bifunctional purine biosynthesis protein PurH.